We begin with the raw amino-acid sequence, 197 residues long: Pyridoxal 5'-phosphate synthase subunit PdxT (197 aa).

Glycine 50 to serine 52 is a binding site for L-glutamine. Catalysis depends on cysteine 82, which acts as the Nucleophile. L-glutamine is bound by residues arginine 111 and isoleucine 140–arginine 141. Catalysis depends on charge relay system residues histidine 176 and glutamate 178.

Belongs to the glutaminase PdxT/SNO family. In the presence of PdxS, forms a dodecamer of heterodimers. Only shows activity in the heterodimer.

The enzyme catalyses aldehydo-D-ribose 5-phosphate + D-glyceraldehyde 3-phosphate + L-glutamine = pyridoxal 5'-phosphate + L-glutamate + phosphate + 3 H2O + H(+). It carries out the reaction L-glutamine + H2O = L-glutamate + NH4(+). Its pathway is cofactor biosynthesis; pyridoxal 5'-phosphate biosynthesis. Its function is as follows. Catalyzes the hydrolysis of glutamine to glutamate and ammonia as part of the biosynthesis of pyridoxal 5'-phosphate. The resulting ammonia molecule is channeled to the active site of PdxS. In Streptomyces griseus subsp. griseus (strain JCM 4626 / CBS 651.72 / NBRC 13350 / KCC S-0626 / ISP 5235), this protein is Pyridoxal 5'-phosphate synthase subunit PdxT.